The following is a 158-amino-acid chain: Ribonuclease H (158 aa).

The RNase H type-1 domain occupies 1-142; sequence MRKQVEIFTD…CDELARAAAM (142 aa). Aspartate 10, glutamate 48, aspartate 70, and aspartate 134 together coordinate Mg(2+).

Belongs to the RNase H family. As to quaternary structure, monomer. The cofactor is Mg(2+).

Its subcellular location is the cytoplasm. The catalysed reaction is Endonucleolytic cleavage to 5'-phosphomonoester.. Its function is as follows. Endonuclease that specifically degrades the RNA of RNA-DNA hybrids. The sequence is that of Ribonuclease H from Cronobacter sakazakii (strain ATCC BAA-894) (Enterobacter sakazakii).